The chain runs to 1562 residues: E3 ubiquitin-protein ligase listerin (1562 aa).

14 HEAT repeats span residues 41–78 (SLYS…DFNQ), 127–164 (KFLK…KDPA), 175–217 (EQLL…SAVL), 262–301 (ETVL…ITSK), 304–348 (LKVC…VSRT), 495–532 (SAIS…FLDS), 555–592 (STYQ…VALS), 813–850 (IRYA…DYNC), 908–945 (YYSR…KTVR), 997–1037 (FKSL…WLDS), 1047–1085 (TVRL…DSLS), 1188–1226 (INQS…SDVD), 1263–1298 (NSFI…KEAG), and 1299–1339 (LINR…NFSP). An RING-type zinc finger spans residues 1508–1555 (CAICYSILHAVDRKLPSKTCPTCKNKFHGACLYKWFRSSGNNTCPLCR).

Belongs to the LTN1 family. Component of the ribosome quality control complex (RQC), composed of the E3 ubiquitin ligase RKR1/LTN1, RQC1 and RQC2, as well as CDC48 and its ubiquitin-binding cofactors associated with the 60S ribosomal subunits.

The protein localises to the nucleus. It localises to the cytoplasm. It is found in the cytosol. It catalyses the reaction S-ubiquitinyl-[E2 ubiquitin-conjugating enzyme]-L-cysteine + [acceptor protein]-L-lysine = [E2 ubiquitin-conjugating enzyme]-L-cysteine + N(6)-ubiquitinyl-[acceptor protein]-L-lysine.. Its pathway is protein modification; protein ubiquitination. E3 ubiquitin-protein ligase component of the ribosome quality control complex (RQC), a ribosome-associated complex that mediates ubiquitination and extraction of incompletely synthesized nascent chains for proteasomal degradation. Mediates ubiquitination of proteins derived from mRNAs lacking stop codons (non-stop proteins) and other translation arrest products induced by poly-lysine sequences and tandem rare codons. Ubiquitination leads to CDC48 recruitment for extraction and degradation of the incomplete translation product. May indirectly play a role in chromatin function and transcription. The chain is E3 ubiquitin-protein ligase listerin from Saccharomyces cerevisiae (strain ATCC 204508 / S288c) (Baker's yeast).